The sequence spans 476 residues: Protein transport protein Sec61 subunit alpha (476 aa).

At 2-33 the chain is on the cytoplasmic side; it reads GIKFLEFIKPFCAVLPEIQKPERKIQFREKVL. The chain crosses the membrane as a helical span at residues 34–53; that stretch reads WTAITLFIFLVCCQIPLFGI. Topologically, residues 54-76 are lumenal; the sequence is MSSDSADPFYWMRVILASNRGTL. The chain crosses the membrane as a helical span at residues 77 to 96; sequence MELGIAPIVTSGLIMQLLAG. The Cytoplasmic segment spans residues 97–117; sequence AKIIEVGDTPKDRALFNGAQK. Residues 118 to 138 form a helical membrane-spanning segment; sequence LFGMIITIGQAIVYVMTGMYG. The Lumenal segment spans residues 139 to 144; sequence DPSEMG. A helical transmembrane segment spans residues 145–165; it reads AGICLLIIIQLFVAGLIVLLL. The Cytoplasmic segment spans residues 166–172; the sequence is DELLQKG. The chain crosses the membrane as a helical span at residues 173-193; the sequence is YGLGSGISLFIATNICETIVW. The Lumenal portion of the chain corresponds to 194–240; sequence KAFGPTTVNTGRGTEFEGAIIALFHLLATRTDKVRALREAFYRQNLP. Residues 241-261 form a helical membrane-spanning segment; that stretch reads NLMNLIATVFVFAVVIYFQGF. At 262 to 288 the chain is on the cytoplasmic side; that stretch reads RVDLPIKSARYRGQYNTYPIKLFYTSN. The chain crosses the membrane as a helical span at residues 289–309; that stretch reads IPIILQSALVSNLYVISQMLS. Topologically, residues 310 to 354 are lumenal; that stretch reads TRFSGNFLVNLLGTWSDATTSGPARAYPVAGLCYYLSPPESFGSV. A helical membrane pass occupies residues 355-375; sequence LDDPVHAVIYIVFMLGSCAFF. Residues 376-420 lie on the Cytoplasmic side of the membrane; sequence SKTWIEVSGSSAKDVAKQLKEQQMVMRGHRETSMVHELNRYIPTA. The helical transmembrane segment at 421–441 threads the bilayer; the sequence is AAFGGLCIGGLSVMADFLGAI. At 442-445 the chain is on the lumenal side; the sequence is GSGT. Residues 446 to 462 traverse the membrane as a helical segment; it reads GILLAVTIIYQYFEIFV. At 463-476 the chain is on the cytoplasmic side; that stretch reads KEQSEVGSMGALLF.

This sequence belongs to the SecY/SEC61-alpha family. As to quaternary structure, the SEC61 channel-forming translocon complex consists of channel-forming core components SEC61A1, SEC61B and SEC61G and different auxiliary components such as SEC62 and SEC63. The SEC61 channel associates with the multi-pass translocon (MPT) complex.

It is found in the endoplasmic reticulum membrane. Component of SEC61 channel-forming translocon complex that mediates transport of signal peptide-containing precursor polypeptides across the endoplasmic reticulum (ER). Forms a ribosome receptor and a gated pore in the ER membrane, both functions required for cotranslational translocation of nascent polypeptides. May cooperate with auxiliary protein SEC62, SEC63 and HSPA5/BiP to enable post-translational transport of small presecretory proteins. The SEC61 channel is also involved in ER membrane insertion of transmembrane proteins: it mediates membrane insertion of the first few transmembrane segments of proteins, while insertion of subsequent transmembrane regions of multi-pass membrane proteins is mediated by the multi-pass translocon (MPT) complex. This Bovichtus variegatus (Thornfish) protein is Protein transport protein Sec61 subunit alpha (sec61a).